The following is a 444-amino-acid chain: Glutamyl-tRNA reductase (444 aa).

Substrate contacts are provided by residues 49 to 52, serine 109, 114 to 116, and glutamine 120; these read TCNR and ETQ. The active-site Nucleophile is the cysteine 50. 189–194 is an NADP(+) binding site; it reads GAGKMG.

This sequence belongs to the glutamyl-tRNA reductase family. Homodimer.

It catalyses the reaction (S)-4-amino-5-oxopentanoate + tRNA(Glu) + NADP(+) = L-glutamyl-tRNA(Glu) + NADPH + H(+). It participates in porphyrin-containing compound metabolism; protoporphyrin-IX biosynthesis; 5-aminolevulinate from L-glutamyl-tRNA(Glu): step 1/2. Functionally, catalyzes the NADPH-dependent reduction of glutamyl-tRNA(Glu) to glutamate 1-semialdehyde (GSA). This is Glutamyl-tRNA reductase from Bacillus cereus (strain 03BB102).